We begin with the raw amino-acid sequence, 125 residues long: UPF0102 protein PA4424 (125 aa).

It belongs to the UPF0102 family.

This Pseudomonas aeruginosa (strain ATCC 15692 / DSM 22644 / CIP 104116 / JCM 14847 / LMG 12228 / 1C / PRS 101 / PAO1) protein is UPF0102 protein PA4424.